The sequence spans 952 residues: Inactive atromentin synthetase invA6 (952 aa).

The tract at residues 58-462 (DSSVQTRSFS…NGRIKDTVIV (405 aa)) is adenylation (A) domain. The Carrier domain maps to 594–672 (APSTETEKTL…SLAKYVDSLV (79 aa)). The segment at 599–669 (TEKTLGRLYA…VISSLAKYVD (71 aa)) is thiolation and peptide carrier (T) domain. S631 is subject to O-(pantetheine 4'-phosphoryl)serine. The interval 695 to 939 (PIFMVHPGIG…LMDFDHVSGF (245 aa)) is thioesterase (TE) domain.

This sequence belongs to the ATP-dependent AMP-binding enzyme family.

Inactive atromentin synthetase homolog. Does not accept 4-hydroxyphenylpyruvate (4-HPP) as substrate. Both the adenylation (A) and the thioesterase (TE) domain of the invA6 enzyme are inactive. The polypeptide is Inactive atromentin synthetase invA6 (invA6) (Paxillus involutus (Naked brimcap)).